Consider the following 1052-residue polypeptide: Swarming motility protein SwrC (1052 aa).

The protein belongs to the resistance-nodulation-cell division (RND) (TC 2.A.6) family.

Functionally, required for self-resistance to surfactin, an antimicrobial lipopeptide surfactant produced by B.subtilis. Also required for swarming motility. This chain is Swarming motility protein SwrC (swrC), found in Bacillus subtilis (strain 168).